Here is a 233-residue protein sequence, read N- to C-terminus: Small ribosomal subunit protein uS3 (233 aa).

The 69-residue stretch at V39–R107 folds into the KH type-2 domain. The tract at residues V212 to N233 is disordered.

Belongs to the universal ribosomal protein uS3 family. In terms of assembly, part of the 30S ribosomal subunit. Forms a tight complex with proteins S10 and S14.

Functionally, binds the lower part of the 30S subunit head. Binds mRNA in the 70S ribosome, positioning it for translation. The polypeptide is Small ribosomal subunit protein uS3 (Chromobacterium violaceum (strain ATCC 12472 / DSM 30191 / JCM 1249 / CCUG 213 / NBRC 12614 / NCIMB 9131 / NCTC 9757 / MK)).